A 151-amino-acid polypeptide reads, in one-letter code: MWGDRRISELVEPVVAALGYELVGVERLSSVGKGALLRIYIDTPSGITIDDCERASHQISALLDVEELMASAYTLEISSPGLNRPLFTEEHFKRFTGVEASITLSKPLNGRREFKGLLRGIRGDRVVILVAGEEFELPLEGIKKARLVPEC.

The protein belongs to the RimP family.

The protein resides in the cytoplasm. Its function is as follows. Required for maturation of 30S ribosomal subunits. The protein is Ribosome maturation factor RimP of Nitrosococcus oceani (strain ATCC 19707 / BCRC 17464 / JCM 30415 / NCIMB 11848 / C-107).